The sequence spans 3063 residues: Collagen alpha-1(XII) chain (3063 aa).

A signal peptide spans 1–23 (MRSRLPPALAALGAALLLSSIEA). Residues 27–117 (PPSDLNFKII…GQLTIQTGSS (91 aa)) enclose the Fibronectin type-III 1 domain. Positions 140–316 (DLVFLVDGSW…DIQNEIISQV (177 aa)) constitute a VWFA 1 domain. O-linked (Xyl...) (chondroitin sulfate) serine glycosylation is present at S329. The region spanning 336-426 (PPSNLIAMEV…SIMEKTQPMK (91 aa)) is the Fibronectin type-III 2 domain. Positions 440–616 (DIVFLVDGSY…RISFELTQSI (177 aa)) constitute a VWFA 2 domain. Fibronectin type-III domains follow at residues 634-722 (PPKD…TEEV), 725-816 (APRN…VRGN), 817-905 (PRDL…LEER), 907-998 (SPQD…LSQD), 999-1087 (SKTL…ASRF), and 1089-1179 (SPRN…TLSD). N-linked (GlcNAc...) asparagine glycosylation is present at N700. O-linked (Xyl...) (chondroitin sulfate) serine glycosylation is present at S798. The segment at 799–830 (GPGTPLTGNAATEEVRGNPRDLRVSDPTTSTM) is disordered. A compositionally biased stretch (basic and acidic residues) spans 811–822 (EEVRGNPRDLRV). The Cell attachment site motif lies at 862–864 (RGD). O-linked (Xyl...) (chondroitin sulfate) serine glycosylation is found at S889 and S981. The interval 1077 to 1099 (RQGSGTTASRFKSPRNLKTSDPT) is disordered. Over residues 1079-1099 (GSGTTASRFKSPRNLKTSDPT) the composition is skewed to polar residues. A VWFA 3 domain is found at 1199-1371 (DIVLLVDGSW…ESLSRIVDDL (173 aa)). Fibronectin type-III domains follow at residues 1387 to 1476 (APSN…LPVP), 1477 to 1567 (VVSL…LPLP), 1568 to 1658 (RPQD…VPAP), 1659 to 1754 (TNLK…APKS), 1755 to 1849 (GPRN…TVRN), 1850 to 1935 (LRVY…LMRG), 1936 to 2026 (LARN…LPRS), 2027 to 2117 (GPRN…VGLL), 2118 to 2206 (PPQN…LYLN), and 2207 to 2294 (VTDL…TVKP). N1763 carries N-linked (GlcNAc...) asparagine glycosylation. Residue N2206 is glycosylated (N-linked (GlcNAc...) asparagine). The segment at 2283–2312 (GVSVKEHTTVKPTEAPTEPPTPPPPPTIPP) is disordered. Over residues 2299–2311 (TEPPTPPPPPTIP) the composition is skewed to pro residues. The 174-residue stretch at 2323–2496 (DIVFLTDASW…ESFEKIEDNL (174 aa)) folds into the VWFA 4 domain. Residues 2451 to 2746 (SGFSVFVVGV…NSCTCTQDSV (296 aa)) form a nonhelical region (NC3) region. Positions 2520–2712 (GFKMLEAYNL…IQSFDIVCSP (193 aa)) constitute a Laminin G-like domain. N-linked (GlcNAc...) asparagine glycans are attached at residues N2528 and N2679. Disordered regions lie at residues 2743 to 2896 (QDSV…GDRG) and 2932 to 3063 (NDYQ…PGSG). 4 consecutive Collagen-like domains span residues 2747–2798 (GPPG…GPNG), 2802–2852 (PGEQ…AMGP), 2853–2898 (RGPP…RGDI), and 2941–2990 (PGPP…GERG). The tract at residues 2747–2898 (GPPGPPGPAG…KGEKGDRGDI (152 aa)) is triple-helical region (COL2) with 1 imperfection. The Cell attachment site signature appears at 2779 to 2781 (RGD). The span at 2784 to 2794 (PPGPQGPPGPQ) shows a compositional bias: pro residues. Over residues 2817 to 2826 (PGLPGRTGTP) the composition is skewed to low complexity. 2 stretches are compositionally biased toward pro residues: residues 2828–2837 (LPGPPGPMGP) and 2853–2862 (RGPPGPPGSP). Low complexity predominate over residues 2864–2874 (SPGVTGPSGKP). The Cell attachment site motif lies at 2895–2897 (RGD). Positions 2899 to 2941 (ASQNMMRAVARQVCEQLISGQMNRFNQMLNQIPNDYQSSRNQP) are nonhelical region (NC2). The segment covering 2941 to 2950 (PGPPGPPGPP) has biased composition (pro residues). The tract at residues 2942 to 3044 (GPPGPPGPPG…RGPPGPPGYC (103 aa)) is triple-helical region (COL1) with 2 imperfections. 14 positions are modified to 4-hydroxyproline: P2944, P2947, P2950, P2959, P2965, P2968, P2971, P2983, P3000, P3003, P3014, P3023, P3026, and P3029. The span at 2957–2966 (GEPGPGGRPG) shows a compositional bias: gly residues. The segment covering 3006-3020 (QGESRTGPPGSTGSR) has biased composition (low complexity). A nonhelical region (NC1) region spans residues 3045-3063 (DSSQCASIPYNGQGYPGSG).

Belongs to the fibril-associated collagens with interrupted helices (FACIT) family. As to quaternary structure, trimer of identical chains each containing 190 kDa of non-triple-helical sequences. In terms of processing, the triple-helical tail is stabilized by disulfide bonds at each end. Post-translationally, hydroxylation on proline residues within the sequence motif, GXPG, is most likely to be 4-hydroxy as this fits the requirement for 4-hydroxylation in vertebrates. Isoform 1 O-glycosylation; glycosaminoglycan of chondroitin-sulfate type. Found in collagen I-containing tissues: both isoform 1 and isoform 2 appear in amnion, chorion, skeletal muscle, small intestine, and in cell culture of dermal fibroblasts, keratinocytes and endothelial cells. Only isoform 2 is found in lung, placenta, kidney and a squamous cell carcinoma cell line. Isoform 1 is also present in the corneal epithelial Bowman's membrane (BM) and the interfibrillar matrix of the corneal stroma, but it is not detected in the limbal BM.

Its subcellular location is the secreted. The protein resides in the extracellular space. It is found in the extracellular matrix. Functionally, type XII collagen interacts with type I collagen-containing fibrils, the COL1 domain could be associated with the surface of the fibrils, and the COL2 and NC3 domains may be localized in the perifibrillar matrix. The protein is Collagen alpha-1(XII) chain (COL12A1) of Homo sapiens (Human).